The chain runs to 342 residues: MNKIKVAIIFGGCSEEHDVSVKSAIEIAANINTEKFDPHYIGITKNGVWKLCKKPCTEWEADSLPAIFSPDRKTHGLLVMKEREYETRRIDVAFPVLHGKCGEDGAIQGLFELSGIPYVGCDIQSSAACMDKSLAYILTKNAGIAVPEFQMIEKGDKPEARTLTYPVFVKPARSGSSFGVTKVNSTEELNAAIEAAGQYDGKILIEQAISGCEVGCAVMGNEDDLIVGEVDQIRLSHGIFRIHQENEPEKGSENAMIIVPADIPVEERNRVQETAKKVYRVLGCRGLARVDLFLQEDGGIVLNEVNTLPGFTSYSRYPRMAAAAGITLPALIDSLITLAIER.

ATP is bound by residues Lys132, Phe168–Lys170, Ser176–Ser177, Glu206–Glu213, and Phe240. The ATP-grasp domain occupies Tyr136 to Thr337. His243 contacts substrate. Asn303 to Glu304 lines the ATP pocket. Mg(2+)-binding residues include Glu304 and Asn306.

Belongs to the D-alanine--D-alanine ligase family. The cofactor is Mg(2+). Mn(2+) serves as cofactor.

It localises to the cell membrane. The enzyme catalyses (R)-lactate + D-alanine + ATP = D-alanyl-(R)-lactate + ADP + phosphate. Its function is as follows. Required for high-level resistance to glycopeptides antibiotics. D-Ala--D-Ala ligase of altered specificity which catalyzes ester bond formation between D-Ala and various D-hydroxy acids; producing a peptidoglycan which does not terminate in D-alanine but in D-lactate, thus preventing vancomycin binding. The chain is Vancomycin B-type resistance protein VanB (vanB) from Enterococcus faecalis (strain ATCC 700802 / V583).